The sequence spans 83 residues: Small ribosomal subunit protein uS17 (83 aa).

This sequence belongs to the universal ribosomal protein uS17 family. Part of the 30S ribosomal subunit.

One of the primary rRNA binding proteins, it binds specifically to the 5'-end of 16S ribosomal RNA. This Pseudoalteromonas atlantica (strain T6c / ATCC BAA-1087) protein is Small ribosomal subunit protein uS17.